The sequence spans 145 residues: Ribonuclease H (145 aa).

The region spanning 1–141 is the RNase H type-1 domain; sequence MQEVTIYSDG…ADALANRGVE (141 aa). Residues D9, E47, D69, and D133 each contribute to the Mg(2+) site.

This sequence belongs to the RNase H family. As to quaternary structure, monomer. Mg(2+) is required as a cofactor.

The protein localises to the cytoplasm. The catalysed reaction is Endonucleolytic cleavage to 5'-phosphomonoester.. In terms of biological role, endonuclease that specifically degrades the RNA of RNA-DNA hybrids. This chain is Ribonuclease H, found in Cupriavidus necator (strain ATCC 17699 / DSM 428 / KCTC 22496 / NCIMB 10442 / H16 / Stanier 337) (Ralstonia eutropha).